An 89-amino-acid chain; its full sequence is MVNPGRTARALCLLCLALLLLGQDTHSRKLLLQEKHSHGVGNGTTTTQEPSRENGGSTGSNNNGQLQFDSAKWEEFHTDYIYTQDVKKP.

An N-terminal signal peptide occupies residues 1 to 22 (MVNPGRTARALCLLCLALLLLG). The propeptide occupies 23–79 (QDTHSRKLLLQEKHSHGVGNGTTTTQEPSRENGGSTGSNNNGQLQFDSAKWEEFHTD). The interval 33–70 (QEKHSHGVGNGTTTTQEPSRENGGSTGSNNNGQLQFDS) is disordered. Asn42 is a glycosylation site (N-linked (GlcNAc...) asparagine). Tyr80 and Tyr82 each carry sulfotyrosine. A propeptide spanning residues 85–89 (DVKKP) is cleaved from the precursor.

It belongs to the phytosulfokine family. In terms of processing, sulfation is important for activity and for the binding to a putative membrane receptor. Post-translationally, PSK-alpha is produced by endopeptidase digestion. PSK-beta is produced from PSK-alpha by exopeptidase digestion. As to expression, expressed throughout the seedling. More abundant in fragments containing shoot or root apexes where cells proliferate vigorously.

The protein resides in the secreted. Its function is as follows. Promotes plant cell differentiation, organogenesis and somatic embryogenesis as well as cell proliferation. The chain is Phytosulfokines 1 (PSK1) from Oryza sativa subsp. japonica (Rice).